The following is a 1133-amino-acid chain: Guanine nucleotide-binding protein G(s) subunit alpha isoforms XLas (1133 aa).

Disordered regions lie at residues 1–195, 322–552, 611–648, and 724–744; these read MGMF…PEAL, DDTA…VPGA, SASA…WPDK, and RSRS…RKQM. The segment covering 31–48 has biased composition (low complexity); sequence LEAPGAAAPGAGAGPAEE. Residues 347 to 362 show a composition bias toward basic and acidic residues; it reads DKSECAERPPVEREAA. 5 stretches are compositionally biased toward low complexity: residues 391–404, 459–471, 482–498, 515–525, and 535–552; these read PEAM…AAQA, GGAA…TPAE, AEPA…ESAS, ATLAEPAARAA, and RAVP…VPGA. Residues 633–643 are compositionally biased toward pro residues; that stretch reads PPTPRPPPRPT. Over residues 732–744 the composition is skewed to basic and acidic residues; sequence KAKDPMEERRKQM. The stretch at 737–761 forms a coiled coil; the sequence is MEERRKQMRKEAIEMREQKRADKKR. The G-alpha domain occupies 778–1133; that stretch reads CTHRLLLLGA…RMHLRQYELL (356 aa). Residues 781–794 form a G1 motif region; that stretch reads RLLLLGAGESGKST. Position 786-794 (786-794) interacts with GTP; the sequence is GAGESGKST. A Mg(2+)-binding site is contributed by Ser-793. Residues 807–828 are disordered; the sequence is FNGEGGEEDPQAARSNSDGEKA. Positions 935-943 are G2 motif; it reads DLLRCRVLT. GTP contacts are provided by residues 936 to 943, 962 to 966, and 1031 to 1034; these read LLRCRVLT, DVGGQ, and NKQD. The residue at position 940 (Arg-940) is an ADP-ribosylarginine; by cholera toxin. Thr-943 is a Mg(2+) binding site. The G3 motif stretch occupies residues 958-967; it reads FHMFDVGGQR. The G4 motif stretch occupies residues 1027–1034; it reads ILFLNKQD. Ser-1091 is subject to Phosphoserine. The segment at 1103–1108 is G5 motif; it reads TCAVDT. GTP is bound at residue Ala-1105.

Belongs to the G-alpha family. G(s) subfamily. G proteins are composed of 3 units; alpha, beta and gamma. The alpha chain contains the guanine nucleotide binding site. Interacts through its N-terminal region with ALEX which is produced from the same locus in a different open reading frame. This interaction may inhibit its adenylyl cyclase-stimulating activity. Interacts with MAGED2.

It is found in the cell membrane. It localises to the apical cell membrane. The enzyme catalyses GTP + H2O = GDP + phosphate + H(+). Functionally, guanine nucleotide-binding proteins (G proteins) function as transducers in numerous signaling pathways controlled by G protein-coupled receptors (GPCRs). The alpha chain contains the guanine nucleotide binding site and alternates between an active, GTP-bound state and an inactive, GDP-bound state. Signaling by an activated GPCR promotes GDP release and GTP binding. The alpha subunit has a low GTPase activity that converts bound GTP to GDP, thereby terminating the signal. Both GDP release and GTP hydrolysis are modulated by numerous regulatory proteins. Signaling involves the activation of adenylyl cyclases, resulting in increased levels of the signaling molecule cAMP. GNAS functions downstream of several GPCRs, including beta-adrenergic receptors. XLas isoforms interact with the same set of receptors as Gnas isoforms. The polypeptide is Guanine nucleotide-binding protein G(s) subunit alpha isoforms XLas (Mus musculus (Mouse)).